A 957-amino-acid chain; its full sequence is Vacuolar membrane protease (957 aa).

The Cytoplasmic portion of the chain corresponds to 1–10 (MARYNPFSFT). A helical membrane pass occupies residues 11 to 31 (PGPVVFFTTVIYVGLFAALLV). Residues 32–369 (THLTVPDYPS…RVFVVFQLHT (338 aa)) lie on the Vacuolar side of the membrane. N48, N105, and N136 each carry an N-linked (GlcNAc...) asparagine glycan. H152 and D164 together coordinate Zn(2+). The Proton acceptor role is filled by E198. E199, E224, and H297 together coordinate Zn(2+). Residues 370 to 390 (LFALCVTLLVVAPIALIGLTF) traverse the membrane as a helical segment. Residues 391–423 (GLSKADKNYLLARKAFVYSSDDDNPVQLYGWRG) lie on the Cytoplasmic side of the membrane. A helical transmembrane segment spans residues 424–444 (FFRFPIVFVSATAVVVALAYL). The Vacuolar segment spans residues 445 to 450 (LVRFNA). A helical membrane pass occupies residues 451-471 (FIIYSSPFAVWSMMLSAWFFV). Residues 472-490 (AWFFSRGADAMRPSALQRM) are Cytoplasmic-facing. The chain crosses the membrane as a helical span at residues 491 to 511 (YALIWLFIGSFVLLTIITVFV). Topologically, residues 512–521 (NNYQVVAGYP) are vacuolar. The chain crosses the membrane as a helical span at residues 522-542 (ALFYFAVVFAALMLSYLELFF). Residues 543–642 (APTKSAYARH…YPGEQEWSGK (100 aa)) lie on the Cytoplasmic side of the membrane. 2 disordered regions span residues 560–591 (RRNS…DATE) and 603–628 (FTRY…RRLD). Residues 564–577 (ESASRPLTGSTTAA) are compositionally biased toward polar residues. The helical transmembrane segment at 643-663 (LPSWIWIIQLLLLAPLVIVLV) threads the bilayer. At 664 to 685 (GQVALLLTSALYQTPSDGNSPL) the chain is on the vacuolar side. Residues 686-706 (FIYLAIAALSVLLLAPTGPFI) traverse the membrane as a helical segment. The Cytoplasmic portion of the chain corresponds to 707 to 713 (HRFTYHV). Residues 714–734 (PTFLFLVCLATVIYNLVAFPF) traverse the membrane as a helical segment. Residues 735 to 957 (SRDHRLKVYF…LVEGFKQFEI (223 aa)) are Vacuolar-facing. Residues N782, N818, and N834 are each glycosylated (N-linked (GlcNAc...) asparagine).

It belongs to the peptidase M28 family. Zn(2+) is required as a cofactor.

The protein resides in the vacuole membrane. Its function is as follows. May be involved in vacuolar sorting and osmoregulation. The sequence is that of Vacuolar membrane protease from Pyrenophora tritici-repentis (strain Pt-1C-BFP) (Wheat tan spot fungus).